Consider the following 679-residue polypeptide: Glycine--tRNA ligase beta subunit (679 aa).

Belongs to the class-II aminoacyl-tRNA synthetase family. In terms of assembly, tetramer of two alpha and two beta subunits.

The protein localises to the cytoplasm. It carries out the reaction tRNA(Gly) + glycine + ATP = glycyl-tRNA(Gly) + AMP + diphosphate. The sequence is that of Glycine--tRNA ligase beta subunit from Streptococcus pyogenes serotype M3 (strain ATCC BAA-595 / MGAS315).